The chain runs to 636 residues: uncharacterized protein (636 aa).

The segment at residues 10 to 36 (CLACRRKKVKCNRQYPCTRCLKYGEAC) is a DNA-binding region (zn(2)-C6 fungal-type). Over residues 556–580 (NSQSTSEFVSPISDTENGSSSQQVS) the composition is skewed to polar residues. Residues 556–581 (NSQSTSEFVSPISDTENGSSSQQVSE) are disordered.

The protein localises to the cytoplasm. Its subcellular location is the nucleus. This is an uncharacterized protein from Schizosaccharomyces pombe (strain 972 / ATCC 24843) (Fission yeast).